A 155-amino-acid chain; its full sequence is MNHLGDIMKNSLKVEPIENGTVIDHIKQGKALNVYNALDIKKDKTITIAMNVPSGKNHKKDILKIEGIELSKYDVDKISLISPNATINIIKNKIVINKFKVEIPNTIEGILKCTNPNCITNIENVAGKFDVEGREPLKIRCFYCEKFLNSIEVYK.

Zn(2+) is bound by residues Cys113, Cys118, Cys141, and Cys144.

The protein belongs to the PyrI family. As to quaternary structure, contains catalytic and regulatory chains. Zn(2+) is required as a cofactor.

Functionally, involved in allosteric regulation of aspartate carbamoyltransferase. The polypeptide is Aspartate carbamoyltransferase regulatory chain (Methanococcus aeolicus (strain ATCC BAA-1280 / DSM 17508 / OCM 812 / Nankai-3)).